The sequence spans 27 residues: Augerpeptide hhe6.2 (27 aa).

3 cysteine pairs are disulfide-bonded: Cys4/Cys13, Cys8/Cys20, and Cys12/Cys27.

Expressed by the venom duct.

Its subcellular location is the secreted. The sequence is that of Augerpeptide hhe6.2 from Hastula hectica (Sea snail).